Consider the following 434-residue polypeptide: Enolase (434 aa).

Gln-163 is a (2R)-2-phosphoglycerate binding site. Glu-205 acts as the Proton donor in catalysis. 3 residues coordinate Mg(2+): Asp-242, Glu-291, and Asp-318. 4 residues coordinate (2R)-2-phosphoglycerate: Lys-343, Arg-372, Ser-373, and Lys-394. Lys-343 (proton acceptor) is an active-site residue.

It belongs to the enolase family. Requires Mg(2+) as cofactor.

It localises to the cytoplasm. The protein localises to the secreted. Its subcellular location is the cell surface. It carries out the reaction (2R)-2-phosphoglycerate = phosphoenolpyruvate + H2O. It functions in the pathway carbohydrate degradation; glycolysis; pyruvate from D-glyceraldehyde 3-phosphate: step 4/5. Catalyzes the reversible conversion of 2-phosphoglycerate (2-PG) into phosphoenolpyruvate (PEP). It is essential for the degradation of carbohydrates via glycolysis. In Streptococcus gordonii (strain Challis / ATCC 35105 / BCRC 15272 / CH1 / DL1 / V288), this protein is Enolase.